The chain runs to 177 residues: Bifunctional protein PyrR (177 aa).

Residues 99 to 111 (VILVDDVIYKGRT) carry the PRPP-binding motif.

It belongs to the purine/pyrimidine phosphoribosyltransferase family. PyrR subfamily.

It carries out the reaction UMP + diphosphate = 5-phospho-alpha-D-ribose 1-diphosphate + uracil. Functionally, regulates the transcription of the pyrimidine nucleotide (pyr) operon in response to exogenous pyrimidines. In terms of biological role, also displays a weak uracil phosphoribosyltransferase activity which is not physiologically significant. This chain is Bifunctional protein PyrR, found in Microcystis aeruginosa (strain NIES-843 / IAM M-2473).